The chain runs to 165 residues: uncharacterized protein (165 aa).

Transmembrane regions (helical) follow at residues 30–50 (GWEL…AAGG), 65–85 (GMVW…VSGL), 86–106 (SAFW…VWQG), 108–128 (FWLL…FASG), and 131–151 (WTVT…SEYG).

It to E.coli YcdZ.

The protein resides in the cell membrane. This is an uncharacterized protein from Escherichia coli (strain K12).